A 145-amino-acid chain; its full sequence is Large ribosomal subunit protein uL15 (145 aa).

Positions 1-18 (MKLHELKYTEGSKKDVTR) are enriched in basic and acidic residues. The tract at residues 1-51 (MKLHELKYTEGSKKDVTRVGRGMASGKGKTSTRGHKGQNSRSGGGVRVGFE) is disordered. Residues 42-51 (SGGGVRVGFE) show a composition bias toward gly residues.

Belongs to the universal ribosomal protein uL15 family. In terms of assembly, part of the 50S ribosomal subunit.

Its function is as follows. Binds to the 23S rRNA. This chain is Large ribosomal subunit protein uL15, found in Mesoplasma florum (strain ATCC 33453 / NBRC 100688 / NCTC 11704 / L1) (Acholeplasma florum).